We begin with the raw amino-acid sequence, 208 residues long: Protein-L-isoaspartate O-methyltransferase (208 aa).

Serine 59 is a catalytic residue.

The protein belongs to the methyltransferase superfamily. L-isoaspartyl/D-aspartyl protein methyltransferase family. Monomer.

It localises to the cytoplasm. It carries out the reaction [protein]-L-isoaspartate + S-adenosyl-L-methionine = [protein]-L-isoaspartate alpha-methyl ester + S-adenosyl-L-homocysteine. Catalyzes the methyl esterification of L-isoaspartyl residues in peptides and proteins that result from spontaneous decomposition of normal L-aspartyl and L-asparaginyl residues. It plays a role in the repair and/or degradation of damaged proteins. The sequence is that of Protein-L-isoaspartate O-methyltransferase (pcm) from Shigella flexneri.